We begin with the raw amino-acid sequence, 540 residues long: Acrosin-binding protein (540 aa).

Positions 1–24 (MKLAASFLLMLLEVLLLPETPLSA) are cleaved as a signal peptide. A pro-ACR binding region spans residues 25–104 (EEALASTPGS…ASWFESFCQF (80 aa)). The propeptide at 25–272 (EEALASTPGS…NPSFFTPRVR (248 aa)) is removed in mature form. Residues 181 to 266 (SLSLGGKEQQ…SKSLSSNPSF (86 aa)) are disordered. Over residues 195–213 (LGLEQQHKQEQIQEHKLEE) the composition is skewed to basic and acidic residues. A compositionally biased stretch (acidic residues) spans 214 to 241 (AQEQEEQEEEEEEEEAKQEEGQGTEEGL). Over residues 256 to 266 (QSKSLSSNPSF) the composition is skewed to polar residues. Residues 316 to 424 (LPHTETLMVL…NQAKIPEKGR (109 aa)) are pro-ACR binding.

Binds pro-ACR. Does not bind the mature form of ACR. As to quaternary structure, binds pro-ACR. Does not bind mature form of ACR. The N-terminus is blocked. In terms of processing, phosphorylated on Tyr residues in capacitated sperm. Post-translationally, synthesized as a 60-kDa precursor, the 32-kDa mature form is post-translationally produced by the removal of the N-terminal half of the precursor during sperm maturation in the testis and/or epididymis.

It localises to the cytoplasmic vesicle. Its subcellular location is the secretory vesicle. It is found in the acrosome. In terms of biological role, acrosomal protein that maintains proacrosin (pro-ACR) as an enzymatically inactive zymogen in the acrosome. Involved also in the acrosome formation. Maintains pro-ACR as an enzymatically inactive zymogen in the acrosome until acrosomal exocytosis. Partially also contributes to the assembly of acrosomal proteins to form an acrosomal granule. Its function is as follows. Rodent specific isoform that participates in the formation of the acrosomal granule into the center of the acrosomal vesicle during early spermiogenesis. In the fertilization process promotes ACR release from the acrosome during acrosomal exocytosis. The sequence is that of Acrosin-binding protein from Rattus norvegicus (Rat).